The primary structure comprises 283 residues: Elongation factor Ts (283 aa).

Residues 79-82 (TDFV) form an involved in Mg(2+) ion dislocation from EF-Tu region.

Belongs to the EF-Ts family.

It localises to the cytoplasm. Functionally, associates with the EF-Tu.GDP complex and induces the exchange of GDP to GTP. It remains bound to the aminoacyl-tRNA.EF-Tu.GTP complex up to the GTP hydrolysis stage on the ribosome. The sequence is that of Elongation factor Ts from Shewanella amazonensis (strain ATCC BAA-1098 / SB2B).